A 245-amino-acid polypeptide reads, in one-letter code: 1-(5-phosphoribosyl)-5-[(5-phosphoribosylamino)methylideneamino] imidazole-4-carboxamide isomerase (245 aa).

The active-site Proton acceptor is Asp-7. Asp-129 acts as the Proton donor in catalysis.

Belongs to the HisA/HisF family.

The protein localises to the cytoplasm. It catalyses the reaction 1-(5-phospho-beta-D-ribosyl)-5-[(5-phospho-beta-D-ribosylamino)methylideneamino]imidazole-4-carboxamide = 5-[(5-phospho-1-deoxy-D-ribulos-1-ylimino)methylamino]-1-(5-phospho-beta-D-ribosyl)imidazole-4-carboxamide. It functions in the pathway amino-acid biosynthesis; L-histidine biosynthesis; L-histidine from 5-phospho-alpha-D-ribose 1-diphosphate: step 4/9. This Pectobacterium atrosepticum (strain SCRI 1043 / ATCC BAA-672) (Erwinia carotovora subsp. atroseptica) protein is 1-(5-phosphoribosyl)-5-[(5-phosphoribosylamino)methylideneamino] imidazole-4-carboxamide isomerase.